The following is a 191-amino-acid chain: MTNLQENLTALSADLAIFERKIQHLAKEMTIDLSHYEIDHLALRVNSEQSAKNWLILLLKCGRILSDNIVNGRKIYLIELEKPVKFANQFVDIIELPLPKNKKYPIEGWEHIEIVMPFLPKESINEWINRVNMYFLXLTQLTIKVSEPKVDGERLPNPSIAVSFTDKTVNHTCIKVHPYSIKKYLRFSKNE.

It to E.coli YecM.

This is an uncharacterized protein from Haemophilus influenzae (strain ATCC 51907 / DSM 11121 / KW20 / Rd).